We begin with the raw amino-acid sequence, 379 residues long: Homoserine O-succinyltransferase (379 aa).

Residues 51–360 (NAVLICHALS…DAPQGHDAFL (310 aa)) form the AB hydrolase-1 domain. Catalysis depends on Ser-157, which acts as the Nucleophile. Arg-227 is a substrate binding site. Catalysis depends on residues Asp-323 and His-356. Asp-357 is a substrate binding site.

The protein belongs to the AB hydrolase superfamily. MetX family. In terms of assembly, homodimer.

It localises to the cytoplasm. The enzyme catalyses L-homoserine + succinyl-CoA = O-succinyl-L-homoserine + CoA. It participates in amino-acid biosynthesis; L-methionine biosynthesis via de novo pathway; O-succinyl-L-homoserine from L-homoserine: step 1/1. In terms of biological role, transfers a succinyl group from succinyl-CoA to L-homoserine, forming succinyl-L-homoserine. The polypeptide is Homoserine O-succinyltransferase (Pseudomonas paraeruginosa (strain DSM 24068 / PA7) (Pseudomonas aeruginosa (strain PA7))).